The primary structure comprises 1208 residues: Defective chorion protein, FC125 isoform (1208 aa).

The signal sequence occupies residues 1 to 19 (MRLFSLLPLLALLVVQAAG). 3 disordered regions span residues 23–60 (VTSD…PSIN), 184–212 (APAP…PDAP), and 268–294 (PAQP…EDPY). Positions 32–41 (AGSTTNSTTD) are enriched in polar residues. Low complexity predominate over residues 268 to 280 (PAQPAAAGTDAQA). Tandem repeats lie at residues 493–518 (QNPM…QQIQ), 519–544 (QNPM…QQIQ), 545–570 (QNPM…QQIQ), 571–596 (QNPM…QQIQ), and 597–622 (QNPM…QQIQ). A 12 X 26 AA approximate tandem repeats, Glu, Met-rich region spans residues 493 to 788 (QNPMMMQQRQ…IQQQQRQMMQ (296 aa)). One copy of the 6; approximate repeat lies at 623–652 (QNPMMMQQRQWSEEQAKIQHDQQMAQQMAQ). Residues 653–680 (QGLMMTEQRQRQWSEDQAKIQQAQQMAQ) form a 7; approximate repeat. The stretch at 681-696 (QTPMMMPQMQQRQWTE) is one 8; approximate repeat. Residues 697–720 (DPQMVQQMQQRQWAEDQTRMQMAQ) form a 9; approximate repeat. The 10; approximate repeat unit spans residues 721 to 733 (QNPMMQQQRQMAE). The stretch at 734–758 (NPQMMQQRQWSEEQTKIEQAQQMAQ) is one 11; approximate repeat. Residues 759-788 (QNQMMMQQMQQRQWSEDQAQIQQQQRQMMQ) form a 12; approximate repeat. Residues 828–839 (EDEDNKAEDDLV) are compositionally biased toward acidic residues. Disordered regions lie at residues 828–875 (EDED…SKSA), 944–1010 (RTIN…GSIF), and 1114–1208 (VQPP…DVDD). Positions 957–977 (SESQKSNSNPPTTLTPAPQEQ) are enriched in polar residues. Acidic residues-rich tracts occupy residues 1163-1178 (PEPD…EPSE) and 1194-1208 (NDID…DVDD).

It localises to the secreted. Functionally, required for proper assembly of the eggshell. The sequence is that of Defective chorion protein, FC125 isoform from Drosophila melanogaster (Fruit fly).